Consider the following 281-residue polypeptide: MGVILEGKPVAEKLEKEIKEKIQFYKSQGVIPTLCIVKVGKNAEAEAYAKSIEKFFSKIGINIERKNFNEEISLVDFKKIMKELEEDSAIHGVLILRPLPEELERGKAFQFLPTKKDVEGVTYENLGRLLVGEDSFHPCTPQAVLELLDFYQIPVEGKNVVVVGRSISVGKPLSLLLLNRNATITVCHSKTKNLVEFTKKAEILIVAIGKPYFVGKDMVGEGQVIIDVGTNVVDGKLVGDVNFEEVKDKVEYITPVPGGIGVITTRVLAMNLLKAVKKVEA.

NADP(+)-binding positions include 164–166 (GRS), S189, and T230.

Belongs to the tetrahydrofolate dehydrogenase/cyclohydrolase family. Homodimer.

It carries out the reaction (6R)-5,10-methylene-5,6,7,8-tetrahydrofolate + NADP(+) = (6R)-5,10-methenyltetrahydrofolate + NADPH. The enzyme catalyses (6R)-5,10-methenyltetrahydrofolate + H2O = (6R)-10-formyltetrahydrofolate + H(+). It participates in one-carbon metabolism; tetrahydrofolate interconversion. Its function is as follows. Catalyzes the oxidation of 5,10-methylenetetrahydrofolate to 5,10-methenyltetrahydrofolate and then the hydrolysis of 5,10-methenyltetrahydrofolate to 10-formyltetrahydrofolate. In Dictyoglomus turgidum (strain DSM 6724 / Z-1310), this protein is Bifunctional protein FolD.